The sequence spans 314 residues: 2,3-dihydroxyphenylpropionate/2,3-dihydroxicinnamic acid 1,2-dioxygenase (314 aa).

Catalysis depends on His115, which acts as the Proton donor. The active-site Proton acceptor is His179.

Belongs to the LigB/MhpB extradiol dioxygenase family. As to quaternary structure, homotetramer. The cofactor is Fe(2+).

It carries out the reaction 3-(2,3-dihydroxyphenyl)propanoate + O2 = (2Z,4E)-2-hydroxy-6-oxonona-2,4-dienedioate + H(+). It catalyses the reaction (2E)-3-(2,3-dihydroxyphenyl)prop-2-enoate + O2 = (2Z,4E,7E)-2-hydroxy-6-oxonona-2,4,7-trienedioate + H(+). Its pathway is aromatic compound metabolism; 3-phenylpropanoate degradation. Its function is as follows. Catalyzes the non-heme iron(II)-dependent oxidative cleavage of 2,3-dihydroxyphenylpropionic acid and 2,3-dihydroxicinnamic acid into 2-hydroxy-6-ketononadienedioate and 2-hydroxy-6-ketononatrienedioate, respectively. The sequence is that of 2,3-dihydroxyphenylpropionate/2,3-dihydroxicinnamic acid 1,2-dioxygenase from Escherichia coli O157:H7.